A 473-amino-acid polypeptide reads, in one-letter code: Alliin lyase 2 (473 aa).

Positions 1–15 are cleaved as a signal peptide; the sequence is MICLVILTCIIMSNS. Positions 16–25 are excised as a propeptide; the sequence is FVNNNNMVQA. One can recognise an EGF-like; atypical domain in the interval 38–84; that stretch reads EAVANINCSEHGRAFLDGIISEGSPKCECNTCYTGPDCSEKIQGCSA. A glycan (N-linked (GlcNAc...) asparagine) is linked at Asn-44. 3 disulfides stabilise this stretch: Cys-45-Cys-64, Cys-66-Cys-75, and Cys-69-Cys-82. A chloride-binding site is contributed by 117 to 125; the sequence is YFFNPVSNF. 2 N-linked (GlcNAc...) asparagine glycosylation sites follow: Asn-171 and Asn-216. An N6-(pyridoxal phosphate)lysine modification is found at Lys-276. The N-linked (GlcNAc...) asparagine glycan is linked to Asn-353. An intrachain disulfide couples Cys-393 to Cys-401.

This sequence belongs to the alliinase family. In terms of assembly, homodimer. It depends on pyridoxal 5'-phosphate as a cofactor. In terms of processing, glycosylated. High expression in bulbs, lower expression in leaves, and no expression in roots.

The protein localises to the vacuole. The catalysed reaction is an S-alkyl-L-cysteine S-oxide = an S-alkyl sulfenate + 2-aminoprop-2-enoate. The enzyme catalyses alliin = allylsulfenate + 2-aminoprop-2-enoate. Its function is as follows. Able to cleave the C-S bond of sulfoxide derivatives of Cys to produce allicin, thus giving rise to all sulfur compounds which are responsible for most of the properties of garlic, such as the specific smell and flavor as well as the health benefits like blood lipid or blood pressure lowering. The polypeptide is Alliin lyase 2 (Allium sativum (Garlic)).